A 145-amino-acid chain; its full sequence is Large ribosomal subunit protein uL11 (145 aa).

Belongs to the universal ribosomal protein uL11 family. Part of the ribosomal stalk of the 50S ribosomal subunit. Interacts with L10 and the large rRNA to form the base of the stalk. L10 forms an elongated spine to which L12 dimers bind in a sequential fashion forming a multimeric L10(L12)X complex. One or more lysine residues are methylated.

Its function is as follows. Forms part of the ribosomal stalk which helps the ribosome interact with GTP-bound translation factors. The chain is Large ribosomal subunit protein uL11 from Rickettsia prowazekii (strain Madrid E).